Consider the following 206-residue polypeptide: Guanylate kinase (206 aa).

A Guanylate kinase-like domain is found at 7–185; the sequence is GLLIVISGPS…AVEKIRAIII (179 aa). 14–21 contacts ATP; that stretch reads GPSGAGKG.

The protein belongs to the guanylate kinase family.

The protein localises to the cytoplasm. It carries out the reaction GMP + ATP = GDP + ADP. Functionally, essential for recycling GMP and indirectly, cGMP. In Caldanaerobacter subterraneus subsp. tengcongensis (strain DSM 15242 / JCM 11007 / NBRC 100824 / MB4) (Thermoanaerobacter tengcongensis), this protein is Guanylate kinase.